The primary structure comprises 228 residues: Lipoprotein-releasing system ATP-binding protein LolD 2 (228 aa).

An ABC transporter domain is found at 9-228 (RGLERVYKTE…KDGHLELQRV (220 aa)). 42 to 49 (GPSGSGKS) is an ATP binding site.

It belongs to the ABC transporter superfamily. Lipoprotein translocase (TC 3.A.1.125) family. In terms of assembly, the complex is composed of two ATP-binding proteins (LolD) and two transmembrane proteins (LolC and LolE).

The protein localises to the cell inner membrane. In terms of biological role, part of the ABC transporter complex LolCDE involved in the translocation of mature outer membrane-directed lipoproteins, from the inner membrane to the periplasmic chaperone, LolA. Responsible for the formation of the LolA-lipoprotein complex in an ATP-dependent manner. The sequence is that of Lipoprotein-releasing system ATP-binding protein LolD 2 from Caulobacter vibrioides (strain ATCC 19089 / CIP 103742 / CB 15) (Caulobacter crescentus).